A 175-amino-acid polypeptide reads, in one-letter code: Large ribosomal subunit protein uL16 (175 aa).

This sequence belongs to the universal ribosomal protein uL16 family.

This is Large ribosomal subunit protein uL16 from Metallosphaera sedula (strain ATCC 51363 / DSM 5348 / JCM 9185 / NBRC 15509 / TH2).